A 60-amino-acid polypeptide reads, in one-letter code: Defensin-like protein 4 (60 aa).

4 cysteine pairs are disulfide-bonded: Cys4/Cys56, Cys17/Cys41, Cys26/Cys51, and Cys30/Cys53.

This sequence belongs to the DEFL family. Protease inhibitor I18 (RTI/MTI-2) subfamily.

It is found in the secreted. Functionally, inhibits trypsin and chymotrypsin. The sequence is that of Defensin-like protein 4 from Brassica napus (Rape).